We begin with the raw amino-acid sequence, 64 residues long: Large ribosomal subunit protein bL35 (64 aa).

This sequence belongs to the bacterial ribosomal protein bL35 family.

The sequence is that of Large ribosomal subunit protein bL35 from Shewanella sediminis (strain HAW-EB3).